We begin with the raw amino-acid sequence, 55 residues long: Protein CADMIUM TOLERANCE 1 (55 aa).

Residues 24–40 (GCLYACIFTALCCFCCY) traverse the membrane as a helical segment.

The protein belongs to the CYSTM1 family.

The protein localises to the cell membrane. Its subcellular location is the secreted. The protein resides in the cell wall. In terms of biological role, confers resistance to heavy metal ions (e.g. cadmium (CdCl(2)) and copper (CuCl(2))) by chelating them at the plasma membrane of root cells, thus stopping their entry and reducing their accumulation. Binds to aluminium (Al). This Oryza sativa subsp. indica (Rice) protein is Protein CADMIUM TOLERANCE 1.